The chain runs to 181 residues: dCTP deaminase (181 aa).

DCTP-binding positions include 100-105 and D116; that span reads RSTFAR. Catalysis depends on E126, which acts as the Proton donor/acceptor. Y158 and Q165 together coordinate dCTP. The interval 160-181 is disordered; that stretch reads GKYQGQRGVTPPKLDNSSSKNF.

The protein belongs to the dCTP deaminase family. As to quaternary structure, homotrimer.

The catalysed reaction is dCTP + H2O + H(+) = dUTP + NH4(+). It functions in the pathway pyrimidine metabolism; dUMP biosynthesis; dUMP from dCTP (dUTP route): step 1/2. In terms of biological role, catalyzes the deamination of dCTP to dUTP. The chain is dCTP deaminase from Desulfurococcus amylolyticus (strain DSM 18924 / JCM 16383 / VKM B-2413 / 1221n) (Desulfurococcus kamchatkensis).